We begin with the raw amino-acid sequence, 242 residues long: Probable ABC transporter ATP-binding protein PEB1C (242 aa).

In terms of domain architecture, ABC transporter spans 2-236; the sequence is IELKNVNKYY…PKTERARLFL (235 aa). 34 to 41 serves as a coordination point for ATP; the sequence is GPSGSGKS.

The protein belongs to the ABC transporter superfamily.

The protein localises to the cell inner membrane. In terms of biological role, most probably involved, with PEB1, in a binding-protein-dependent transport system for an amino acid. Probably responsible for energy coupling to the transport system. The chain is Probable ABC transporter ATP-binding protein PEB1C (peb1C) from Campylobacter jejuni subsp. jejuni serotype O:2 (strain ATCC 700819 / NCTC 11168).